We begin with the raw amino-acid sequence, 248 residues long: Aquaporin Z (248 aa).

The next 2 membrane-spanning stretches (helical) occupy residues 11–31 and 36–56; these read FIGT…AAAF and IGFA…AFAI. The NPA 1 signature appears at 65–67; that stretch reads NPA. 3 helical membrane-spanning segments follow: residues 87–107, 132–152, and 161–181; these read IAAQ…IAGG, LLAC…IILG, and GFAP…SIPV. Residues 187–189 carry the NPA 2 motif; sequence NPA. A helical transmembrane segment spans residues 203–223; the sequence is IAELWLFWLAPIVGAALAGLF.

Belongs to the MIP/aquaporin (TC 1.A.8) family. In terms of assembly, homotetramer.

It localises to the cell inner membrane. The enzyme catalyses H2O(in) = H2O(out). Channel that permits osmotically driven movement of water in both directions. It is involved in the osmoregulation and in the maintenance of cell turgor during volume expansion in rapidly growing cells. It mediates rapid entry or exit of water in response to abrupt changes in osmolarity. The polypeptide is Aquaporin Z (Gloeobacter violaceus (strain ATCC 29082 / PCC 7421)).